The following is a 95-amino-acid chain: Large ribosomal subunit protein uL23 (95 aa).

Belongs to the universal ribosomal protein uL23 family. As to quaternary structure, part of the 50S ribosomal subunit. Contacts protein L29, and trigger factor when it is bound to the ribosome.

Its function is as follows. One of the early assembly proteins it binds 23S rRNA. One of the proteins that surrounds the polypeptide exit tunnel on the outside of the ribosome. Forms the main docking site for trigger factor binding to the ribosome. In Syntrophotalea carbinolica (strain DSM 2380 / NBRC 103641 / GraBd1) (Pelobacter carbinolicus), this protein is Large ribosomal subunit protein uL23.